We begin with the raw amino-acid sequence, 423 residues long: T-box protein 2 (423 aa).

A DNA-binding region (T-box) is located at residues 70 to 243; the sequence is LWQQFSQCGT…NNPFAKGFRD (174 aa). Disordered stretches follow at residues 238 to 324 and 384 to 423; these read AKGF…PLRS and VEATSEDSEEAEKPEVKKEQKSVTPPKKGGFDVLDLLSKP. Positions 261 to 283 are enriched in polar residues; sequence DATQSPPGKTASLPTHSPHPSES. Residues 302–317 show a composition bias toward low complexity; that stretch reads TPTTSSLSTSTTPTLS. The segment covering 394 to 404 has biased composition (basic and acidic residues); the sequence is AEKPEVKKEQK.

Post-translationally, sumoylated. In terms of tissue distribution, expressed in body wall muscles and a subset of pharyngeal neurons. Expressed in head neurons and occassionally tail neurons. Not expressed in the pharynx.

It is found in the nucleus. Involved in the transcriptional regulation of genes required for the development of pharyngeal muscles derived from the ABa lineage. Acts as a transcriptional repressor and binds to T-box binding sites in its own promoter to negatively autoregulate its own expression in neurons, seam cells and the gut in order to restrict its expression to certain tissues. May function together with the nfya-1-NF-Y complex to repress its own expression. Plays a role in neural fate specification in the hermaphrodite-specific neuron (HSN)/PHB neuron lineage, acting in concert with homeobox protein egl-5 and the asymmetric cell division protein ham-1. The sequence is that of T-box protein 2 from Caenorhabditis elegans.